We begin with the raw amino-acid sequence, 631 residues long: Phosphomethylpyrimidine synthase (631 aa).

Substrate is bound by residues asparagine 239, methionine 268, tyrosine 297, histidine 333, 353–355 (SRG), 394–397 (DGLR), and glutamate 433. Histidine 437 contacts Zn(2+). Tyrosine 460 lines the substrate pocket. Histidine 501 contacts Zn(2+). Residues cysteine 581, cysteine 584, and cysteine 589 each contribute to the [4Fe-4S] cluster site.

It belongs to the ThiC family. As to quaternary structure, homodimer. It depends on [4Fe-4S] cluster as a cofactor.

It catalyses the reaction 5-amino-1-(5-phospho-beta-D-ribosyl)imidazole + S-adenosyl-L-methionine = 4-amino-2-methyl-5-(phosphooxymethyl)pyrimidine + CO + 5'-deoxyadenosine + formate + L-methionine + 3 H(+). The protein operates within cofactor biosynthesis; thiamine diphosphate biosynthesis. Functionally, catalyzes the synthesis of the hydroxymethylpyrimidine phosphate (HMP-P) moiety of thiamine from aminoimidazole ribotide (AIR) in a radical S-adenosyl-L-methionine (SAM)-dependent reaction. This is Phosphomethylpyrimidine synthase from Escherichia coli O157:H7.